We begin with the raw amino-acid sequence, 525 residues long: Probable CoA ligase CCL9 (525 aa).

Residues 171–179 (TSGTTSRPK), 311–316 (EAYAMT), Asp-395, 407–410 (LVGR), and Lys-501 contribute to the ATP site. The SBD1 stretch occupies residues 242 to 311 (SASTFWSDMI…EESFGAPVLE (70 aa)). The interval 312–375 (AYAMTEAAHL…IRGPNVTKGY (64 aa)) is SBD2.

This sequence belongs to the ATP-dependent AMP-binding enzyme family.

The protein localises to the cytoplasm. It localises to the cytosol. This is Probable CoA ligase CCL9 from Humulus lupulus (European hop).